Consider the following 1018-residue polypeptide: Serine/threonine-protein kinase 31 (1018 aa).

In terms of domain architecture, Tudor spans 78–137; that stretch reads NLDPKKIYGGLFSEDKCWYRCKVLKTISDDKCLVRYIDYGNTEILNRSDIVEIPPELQFS. The stretch at 298–358 forms a coiled coil; it reads AKIKQDQKLI…TKHLESTLKT (61 aa). The 308-residue stretch at 711-1018 folds into the Protein kinase domain; that stretch reads IGLLKYMNSG…EKTRNGEANP (308 aa). ATP-binding positions include 717 to 725 and Lys-738; that span reads MNSGGLLTM. The interval 988-1018 is disordered; it reads IECTQHSREDESKMESLDRYSEKTRNGEANP.

The protein belongs to the protein kinase superfamily. Ser/Thr protein kinase family. In terms of tissue distribution, testis specific. Expressed only in male germ cells.

The enzyme catalyses L-seryl-[protein] + ATP = O-phospho-L-seryl-[protein] + ADP + H(+). It catalyses the reaction L-threonyl-[protein] + ATP = O-phospho-L-threonyl-[protein] + ADP + H(+). In Mus musculus (Mouse), this protein is Serine/threonine-protein kinase 31 (Stk31).